A 33-amino-acid chain; its full sequence is Thrombin-like enzyme RP34 (33 aa).

Residues 1-33 (VIGGDEXDINEHRSLALMYXSWSHRFIXXGXLI) enclose the Peptidase S1 domain.

It belongs to the peptidase S1 family. Snake venom subfamily. As to quaternary structure, homodimer. Expressed by the venom gland.

The protein resides in the secreted. The enzyme catalyses Selective cleavage of Arg-|-Xaa bond in fibrinogen, to form fibrin, and release fibrinopeptide A. The specificity of further degradation of fibrinogen varies with species origin of the enzyme.. Thrombin-like snake venom serine protease that displays clotting activity on fibrinogen. Shows both arginine-ester hydrolase and amidase activities on synthetic substrates. Also shows proteolytic activity toward casein. In Cerastes cerastes (Horned desert viper), this protein is Thrombin-like enzyme RP34.